The following is a 65-amino-acid chain: Large ribosomal subunit protein bL35 (65 aa).

The tract at residues 24 to 48 (RRKAGKSHLLEHKSSDKKRSMSKTT) is disordered. Residues 31-42 (HLLEHKSSDKKR) show a composition bias toward basic and acidic residues.

The protein belongs to the bacterial ribosomal protein bL35 family.

This chain is Large ribosomal subunit protein bL35, found in Nostoc punctiforme (strain ATCC 29133 / PCC 73102).